The chain runs to 733 residues: Oligopeptide transporter 8 (733 aa).

14 helical membrane passes run 42-62, 66-86, 115-135, 147-167, 209-229, 244-264, 281-301, 357-377, 413-433, 442-462, 531-551, 596-616, 644-664, and 677-697; these read MWVL…FFWY, PLTI…HLMA, VLIT…HILS, FLPA…WAGL, FFVI…YLFT, SILV…SFGL, FFAS…ITPL, FAVT…HVLI, LWWF…ICIY, WWGA…VGVI, VGTL…MAEI, YSNI…VYLA, ASAV…HFVF, and VLSG…FLAL.

This sequence belongs to the oligopeptide OPT transporter (TC 2.A.67.1) family.

The protein resides in the membrane. May be involved in the translocation of tetra- and pentapeptides across the cellular membrane in an energy-dependent manner. This is Oligopeptide transporter 8 (OPT8) from Arabidopsis thaliana (Mouse-ear cress).